The primary structure comprises 535 residues: CTP synthase (535 aa).

Positions 1-267 are amidoligase domain; that stretch reads MTKYIFVTGG…DQIVCDHLKL (267 aa). Ser13 is a binding site for CTP. Residue Ser13 coordinates UTP. ATP is bound at residue 14–19; sequence SLGKGI. An L-glutamine-binding site is contributed by Tyr54. An ATP-binding site is contributed by Asp71. The Mg(2+) site is built by Asp71 and Glu141. Residues 148–150, 188–193, and Lys224 each bind CTP; these read DIE and KTKPTQ. UTP-binding positions include 188-193 and Lys224; that span reads KTKPTQ. 240 to 242 provides a ligand contact to ATP; sequence RDA. Residues 292-534 enclose the Glutamine amidotransferase type-1 domain; sequence KIALVGKYVE…VKASLTNKES (243 aa). Gly354 lines the L-glutamine pocket. The active-site Nucleophile; for glutamine hydrolysis is Cys381. L-glutamine contacts are provided by residues 382-385, Glu405, and Arg462; that span reads LGMQ. Residues His507 and Glu509 contribute to the active site.

It belongs to the CTP synthase family. Homotetramer.

It catalyses the reaction UTP + L-glutamine + ATP + H2O = CTP + L-glutamate + ADP + phosphate + 2 H(+). The catalysed reaction is L-glutamine + H2O = L-glutamate + NH4(+). It carries out the reaction UTP + NH4(+) + ATP = CTP + ADP + phosphate + 2 H(+). Its pathway is pyrimidine metabolism; CTP biosynthesis via de novo pathway; CTP from UDP: step 2/2. With respect to regulation, allosterically activated by GTP, when glutamine is the substrate; GTP has no effect on the reaction when ammonia is the substrate. The allosteric effector GTP functions by stabilizing the protein conformation that binds the tetrahedral intermediate(s) formed during glutamine hydrolysis. Inhibited by the product CTP, via allosteric rather than competitive inhibition. Catalyzes the ATP-dependent amination of UTP to CTP with either L-glutamine or ammonia as the source of nitrogen. Regulates intracellular CTP levels through interactions with the four ribonucleotide triphosphates. This Bacillus anthracis (strain A0248) protein is CTP synthase.